A 287-amino-acid chain; its full sequence is MEMO1 family protein MJ0403 (287 aa).

The protein belongs to the MEMO1 family.

This chain is MEMO1 family protein MJ0403, found in Methanocaldococcus jannaschii (strain ATCC 43067 / DSM 2661 / JAL-1 / JCM 10045 / NBRC 100440) (Methanococcus jannaschii).